Consider the following 520-residue polypeptide: NAD(P)H-quinone oxidoreductase subunit 2 (520 aa).

14 helical membrane-spanning segments follow: residues 15–35 (ILPE…DLIL), 42–62 (WIGY…YFQW), 79–99 (LSII…LMSI), 106–126 (GTAL…GMFV), 132–152 (LVMI…LTGY), 167–187 (LLIG…LYGL), 210–230 (LGAV…ISAA), 244–264 (PTPV…ALAI), 280–300 (FVFT…ALAQ), 306–326 (MLAY…IAGT), 334–354 (IFYL…IILF), 378–398 (LGLS…GFFG), 400–420 (IYLF…LGLV), and 466–486 (VGLV…NPLF).

Belongs to the complex I subunit 2 family. NDH-1 can be composed of about 15 different subunits; different subcomplexes with different compositions have been identified which probably have different functions.

It is found in the cellular thylakoid membrane. The enzyme catalyses a plastoquinone + NADH + (n+1) H(+)(in) = a plastoquinol + NAD(+) + n H(+)(out). It catalyses the reaction a plastoquinone + NADPH + (n+1) H(+)(in) = a plastoquinol + NADP(+) + n H(+)(out). NDH-1 shuttles electrons from an unknown electron donor, via FMN and iron-sulfur (Fe-S) centers, to quinones in the respiratory and/or the photosynthetic chain. The immediate electron acceptor for the enzyme in this species is believed to be plastoquinone. Couples the redox reaction to proton translocation, and thus conserves the redox energy in a proton gradient. Cyanobacterial NDH-1 also plays a role in inorganic carbon-concentration. In Trichormus variabilis (strain ATCC 29413 / PCC 7937) (Anabaena variabilis), this protein is NAD(P)H-quinone oxidoreductase subunit 2.